A 202-amino-acid polypeptide reads, in one-letter code: Small ribosomal subunit protein uS4 (202 aa).

Residues 16–43 (GELPGLSRKTPRRAYPPGQHGQGRRKRS) are disordered. Residues 90 to 152 (MRLDNTVFRL…DNSRRMVETN (63 aa)) form the S4 RNA-binding domain.

The protein belongs to the universal ribosomal protein uS4 family. As to quaternary structure, part of the 30S ribosomal subunit. Contacts protein S5. The interaction surface between S4 and S5 is involved in control of translational fidelity.

In terms of biological role, one of the primary rRNA binding proteins, it binds directly to 16S rRNA where it nucleates assembly of the body of the 30S subunit. With S5 and S12 plays an important role in translational accuracy. This chain is Small ribosomal subunit protein uS4, found in Crocosphaera subtropica (strain ATCC 51142 / BH68) (Cyanothece sp. (strain ATCC 51142)).